The chain runs to 710 residues: Lactoperoxidase (710 aa).

A signal peptide spans 1-23; that stretch reads MKVLLHLPALLASLTLLQTAASA. Positions 24-80 are excised as a propeptide; sequence SDDPTAETDIIHDTVEEVKVWVNKAFLDSRDRLKMAMTTKIHSTRHLSDYLKHAKGR. Cysteines 130 and 143 form a disulfide. Heme b is bound at residue Asp-223. Residue His-224 is the Proton acceptor of the active site. Residue Asp-225 participates in Ca(2+) binding. Intrachain disulfides connect Cys-244–Cys-254 and Cys-248–Cys-272. Residues Thr-299, Phe-301, Asp-303, and Ser-305 each coordinate Ca(2+). Ser-313 carries the post-translational modification Phosphoserine. A disulfide bridge links Cys-352 with Cys-363. 2 residues coordinate heme b: Glu-373 and His-466. Tyr-480 carries the post-translational modification 3'-nitrotyrosine. Disulfide bonds link Cys-571-Cys-628 and Cys-669-Cys-694.

Belongs to the peroxidase family. The cofactor is Ca(2+). It depends on heme b as a cofactor. In terms of tissue distribution, expressed in the colon, including colonocytes and mucin-containing goblet cells. Not detected in the ileum.

The protein localises to the secreted. The protein resides in the cytoplasm. It catalyses the reaction 2 a phenolic donor + H2O2 = 2 a phenolic radical donor + 2 H2O. The catalysed reaction is thiocyanate + H2O2 + H(+) = hypothiocyanous acid + H2O. It carries out the reaction iodide + H2O2 = hypoiodite + H2O. Heme-containing oxidoreductase which catalyzes the conversion of thiocyanate (SCN(-)) into antimicrobial agent hypothiocyanous acid (OSCN(-)) in the presence of hydrogen peroxide (H2O2). Also involved in the conversion of iodide (I(-)) into hypoiodite (IO(-)) in the presence of H2O2. Responsible for the inactivation of a wide range of micro-organisms and hence, important component of defense mechanism. May be implicated in airway host defense against infection. May contribute to maintaining an appropriate H2O2 cellular level, therefore protecting cells from H2O2-caused injuries and inflammation. This Mus musculus (Mouse) protein is Lactoperoxidase.